The chain runs to 208 residues: FMN-dependent NADH:quinone oxidoreductase (208 aa).

99–102 (MWNF) is an FMN binding site.

Belongs to the azoreductase type 1 family. In terms of assembly, homodimer. FMN serves as cofactor.

The catalysed reaction is 2 a quinone + NADH + H(+) = 2 a 1,4-benzosemiquinone + NAD(+). It carries out the reaction N,N-dimethyl-1,4-phenylenediamine + anthranilate + 2 NAD(+) = 2-(4-dimethylaminophenyl)diazenylbenzoate + 2 NADH + 2 H(+). Its function is as follows. Quinone reductase that provides resistance to thiol-specific stress caused by electrophilic quinones. Also exhibits azoreductase activity. Catalyzes the reductive cleavage of the azo bond in aromatic azo compounds to the corresponding amines. This Brevibacillus brevis (strain 47 / JCM 6285 / NBRC 100599) protein is FMN-dependent NADH:quinone oxidoreductase.